The sequence spans 567 residues: Dihydrolipoyllysine-residue acetyltransferase component of pyruvate dehydrogenase complex (567 aa).

Lipoyl-binding domains are found at residues 2 to 75 and 108 to 181; these read SKQI…LVLE and IVEV…MRFE. N6-lipoyllysine occurs at positions 41 and 147. The segment covering 192-238 has biased composition (low complexity); sequence SAPASTSAPQTAAPATTAQAPQAAAPDTTAQAPQAAAPDTTAQAAQS. A disordered region spans residues 192–249; it reads SAPASTSAPQTAAPATTAQAPQAAAPDTTAQAPQAAAPDTTAQAAQSNNNVSGLSQEQ. A compositionally biased stretch (polar residues) spans 239-249; the sequence is NNNVSGLSQEQ. Positions 258–295 constitute a Peripheral subunit-binding (PSBD) domain; sequence HATPVIRRLAREFGVNLDKVKGTGRKGRIVKEDIEAYV. Catalysis depends on residues C484, H540, and D544.

The protein belongs to the 2-oxoacid dehydrogenase family. In terms of assembly, forms a 24-polypeptide structural core with octahedral symmetry. (R)-lipoate is required as a cofactor.

It catalyses the reaction N(6)-[(R)-dihydrolipoyl]-L-lysyl-[protein] + acetyl-CoA = N(6)-[(R)-S(8)-acetyldihydrolipoyl]-L-lysyl-[protein] + CoA. The pyruvate dehydrogenase complex catalyzes the overall conversion of pyruvate to acetyl-CoA and CO(2). It contains multiple copies of three enzymatic components: pyruvate dehydrogenase (E1), dihydrolipoamide acetyltransferase (E2) and lipoamide dehydrogenase (E3). The polypeptide is Dihydrolipoyllysine-residue acetyltransferase component of pyruvate dehydrogenase complex (aceF) (Haemophilus influenzae (strain ATCC 51907 / DSM 11121 / KW20 / Rd)).